Reading from the N-terminus, the 132-residue chain is Small ribosomal subunit protein uS19 (132 aa).

It belongs to the universal ribosomal protein uS19 family.

Functionally, protein S19 forms a complex with S13 that binds strongly to the 16S ribosomal RNA. The chain is Small ribosomal subunit protein uS19 from Korarchaeum cryptofilum (strain OPF8).